Here is a 196-residue protein sequence, read N- to C-terminus: Probable malonic semialdehyde reductase RutE (196 aa).

Belongs to the nitroreductase family. HadB/RutE subfamily. Requires FMN as cofactor.

It carries out the reaction 3-hydroxypropanoate + NADP(+) = 3-oxopropanoate + NADPH + H(+). May reduce toxic product malonic semialdehyde to 3-hydroxypropionic acid, which is excreted. In Escherichia coli O6:H1 (strain CFT073 / ATCC 700928 / UPEC), this protein is Probable malonic semialdehyde reductase RutE.